The chain runs to 462 residues: Chromosomal replication initiator protein DnaA (462 aa).

The interval 1–83 is domain I, interacts with DnaA modulators; it reads MSLSLWQQCL…LRFEVGSKPA (83 aa). The tract at residues 83–125 is domain II; it reads AARAHNNPVTASVSAPVAPVTRSAPMRPSWDNSPAQPELSYRS. The tract at residues 104–125 is disordered; it reads RSAPMRPSWDNSPAQPELSYRS. The span at 112–125 shows a compositional bias: polar residues; that stretch reads WDNSPAQPELSYRS. The domain III, AAA+ region stretch occupies residues 126 to 342; sequence NVNPKHTFDN…GALNRVIANA (217 aa). Positions 170, 172, 173, and 174 each coordinate ATP. The segment at 343–462 is domain IV, binds dsDNA; the sequence is NFTGRAITID…FSNLIRTLSS (120 aa).

This sequence belongs to the DnaA family. As to quaternary structure, oligomerizes as a right-handed, spiral filament on DNA at oriC.

It localises to the cytoplasm. In terms of biological role, plays an essential role in the initiation and regulation of chromosomal replication. ATP-DnaA binds to the origin of replication (oriC) to initiate formation of the DNA replication initiation complex once per cell cycle. Binds the DnaA box (a 9 base pair repeat at the origin) and separates the double-stranded (ds)DNA. Forms a right-handed helical filament on oriC DNA; dsDNA binds to the exterior of the filament while single-stranded (ss)DNA is stabiized in the filament's interior. The ATP-DnaA-oriC complex binds and stabilizes one strand of the AT-rich DNA unwinding element (DUE), permitting loading of DNA polymerase. After initiation quickly degrades to an ADP-DnaA complex that is not apt for DNA replication. Binds acidic phospholipids. The chain is Chromosomal replication initiator protein DnaA from Yersinia pseudotuberculosis serotype O:1b (strain IP 31758).